A 1687-amino-acid polypeptide reads, in one-letter code: Gag-Pol polyprotein (1687 aa).

A lipid anchor (N-myristoyl glycine; by host) is attached at Gly2. Disordered regions lie at residues 106-197 (SSPE…VILP) and 420-490 (HKRE…LDKD). The PTAP/PSAP motif motif lies at 108–111 (PENT). The segment covering 139 to 157 (EPPPYPAALPPPLAPPAVG) has biased composition (pro residues). The PPXY motif signature appears at 140 to 143 (PPPY). A coiled-coil region spans residues 408 to 455 (LQDLVREAEKVYHKRETEEERQEREKKEAEERERRRDRRQEKNLTRIL). Composition is skewed to basic and acidic residues over residues 420–451 (HKRE…EKNL) and 479–490 (TPRDGRPPLDKD). Residues 490-507 (DQCAYCKEKGHWARECPQ) form a CCHC-type zinc finger. The region spanning 544 to 614 (IEFLVDTGAE…CPAPLLGRDL (71 aa)) is the Peptidase A2 domain. Asp549 serves as the catalytic Protease; shared with dimeric partner. In terms of domain architecture, Reverse transcriptase spans 721–912 (LDLGVLVPCQ…KEVTYLGYLL (192 aa)). Positions 789, 863, 864, 1180, 1200, 1221, and 1291 each coordinate Mg(2+). Positions 1153 to 1299 (LPGVPAWYTD…ADEAAKQAAL (147 aa)) constitute an RNase H type-1 domain. The HHCC-type zinc-finger motif lies at 1339–1377 (HQLTHLGPEKLLQLVNRTSLLIPNLQSAVREVTSQCQAC). An Integrase catalytic domain is found at 1394–1552 (RGDRPGVYWE…TPYEILYGGP (159 aa)). Asp1405 and Asp1464 together coordinate Mg(2+).

The protein belongs to the retroviral Pol polyprotein family. As to quaternary structure, homohexamer; further associates as homomultimer. The virus core is composed of a lattice formed from hexagonal rings, each containing six capsid monomers. In terms of assembly, interacts (via PPXY motif) with host NEDD4. Interacts (via PSAP motif) with host TSG101. The reverse transcriptase is a monomer (Potential). Interacts (via RNase domains) with host release factor ETF1; this interaction is essential for translational readthrough of amber codon between viral gag and pol genes, as well as for viral replication. As to quaternary structure, homodimer. It depends on Mg(2+) as a cofactor. In terms of processing, specific enzymatic cleavages by the viral protease yield mature proteins. The protease is released by autocatalytic cleavage. The polyprotein is cleaved during and after budding, this process is termed maturation. Phosphorylated on serine residues.

The protein resides in the virion. Its subcellular location is the host cell membrane. It localises to the host late endosome membrane. It is found in the host endosome. The protein localises to the host multivesicular body. The protein resides in the host cytoplasm. It catalyses the reaction DNA(n) + a 2'-deoxyribonucleoside 5'-triphosphate = DNA(n+1) + diphosphate. It carries out the reaction Endonucleolytic cleavage to 5'-phosphomonoester.. Most efficiently inhibited by Amprenavir, which is able to block Gag-Pol processing in infected cells. Plays a role in budding and is processed by the viral protease during virion maturation outside the cell. During budding, it recruits, in a PPXY-dependent or independent manner, Nedd4-like ubiquitin ligases that conjugate ubiquitin molecules to Gag-Pol, or to Gag-Pol binding host factors. Interaction with HECT ubiquitin ligases probably links the viral protein to the host ESCRT pathway and facilitates release. Its function is as follows. Targets Gag and gag-pol polyproteins to the plasma membrane via a multipartite membrane binding signal, that includes its myristoylated N-terminus. Also mediates nuclear localization of the pre-integration complex. In terms of biological role, constituent of the pre-integration complex (PIC) which tethers the latter to mitotic chromosomes. This allows the integration of the viral genome into the host DNA. Functionally, forms the spherical core of the virion that encapsulates the genomic RNA-nucleocapsid complex. Involved in the packaging and encapsidation of two copies of the genome. Binds with high affinity to conserved UCUG elements within the packaging signal, located near the 5'-end of the genome. This binding is dependent on genome dimerization. Acts as a nucleic acid chaperone which is involved in rearrangement of nucleic acid secondary structures during gRNA retrotranscription. Its function is as follows. The aspartyl protease mediates proteolytic cleavages of Gag and Gag-Pol polyproteins during or shortly after the release of the virion from the plasma membrane. Cleavages take place as an ordered, step-wise cascade to yield mature proteins. This process is called maturation. Displays maximal activity during the budding process just prior to particle release from the cell. In terms of biological role, RT is a multifunctional enzyme that converts the viral dimeric RNA genome into dsDNA in the cytoplasm, shortly after virus entry into the cell. This enzyme displays a DNA polymerase activity that can copy either DNA or RNA templates, and a ribonuclease H (RNase H) activity that cleaves the RNA strand of RNA-DNA heteroduplexes in a partially processive 3' to 5' endonucleasic mode. Conversion of viral genomic RNA into dsDNA requires many steps. A tRNA binds to the primer-binding site (PBS) situated at the 5' end of the viral RNA. RT uses the 3' end of the tRNA primer to perform a short round of RNA-dependent minus-strand DNA synthesis. The reading proceeds through the U5 region and ends after the repeated (R) region which is present at both ends of viral RNA. The portion of the RNA-DNA heteroduplex is digested by the RNase H, resulting in a ssDNA product attached to the tRNA primer. This ssDNA/tRNA hybridizes with the identical R region situated at the 3' end of viral RNA. This template exchange, known as minus-strand DNA strong stop transfer, can be either intra- or intermolecular. RT uses the 3' end of this newly synthesized short ssDNA to perform the RNA-dependent minus-strand DNA synthesis of the whole template. RNase H digests the RNA template except for a polypurine tract (PPT) situated at the 5' end of the genome. It is not clear if both polymerase and RNase H activities are simultaneous. RNase H probably can proceed both in a polymerase-dependent (RNA cut into small fragments by the same RT performing DNA synthesis) and a polymerase-independent mode (cleavage of remaining RNA fragments by free RTs). Secondly, RT performs DNA-directed plus-strand DNA synthesis using the PPT that has not been removed by RNase H as primers. PPT and tRNA primers are then removed by RNase H. The 3' and 5' ssDNA PBS regions hybridize to form a circular dsDNA intermediate. Strand displacement synthesis by RT to the PBS and PPT ends produces a blunt ended, linear dsDNA copy of the viral genome that includes long terminal repeats (LTRs) at both ends. Functionally, catalyzes viral DNA integration into the host chromosome, by performing a series of DNA cutting and joining reactions. This enzyme activity takes place after virion entry into a cell and reverse transcription of the RNA genome in dsDNA. The first step in the integration process is 3' processing. This step requires a complex comprising the viral genome, matrix protein and integrase. This complex is called the pre-integration complex (PIC). The integrase protein removes 2 nucleotides from each 3' end of the viral DNA, leaving recessed CA OH's at the 3' ends. In the second step that requires cell division, the PIC enters cell nucleus. In the third step, termed strand transfer, the integrase protein joins the previously processed 3' ends to the 5' ends of strands of target cellular DNA at the site of integration. The last step is viral DNA integration into host chromosome. This is Gag-Pol polyprotein (pol) from Woolly monkey sarcoma virus (WMSV).